The primary structure comprises 549 residues: FMRFamide receptor (549 aa).

At 1-117 the chain is on the extracellular side; that stretch reads MSGTAVARLL…NNRIEFWVCG (117 aa). Asparagine 59, asparagine 70, and asparagine 93 each carry an N-linked (GlcNAc...) asparagine glycan. A helical membrane pass occupies residues 118-138; the sequence is VLINIVGVLGILGNIISMIIL. At 139 to 158 the chain is on the cytoplasmic side; sequence SRPQMRSSINYLLTGLARCD. A helical transmembrane segment spans residues 159-179; it reads TVLIITSILLFGIPSIYPYTG. The Extracellular segment spans residues 180-181; that stretch reads HF. Residues 182 to 202 traverse the membrane as a helical segment; sequence FGYYNYVYPFISPAVFPIGMI. Over 203–238 the chain is Cytoplasmic; the sequence is AQTASIYMTFTVTLERYVAVCHPLKARALCTYGRAK. A helical membrane pass occupies residues 239-259; the sequence is IYFIVCVCFSLAYNMPRFWEV. Topologically, residues 260 to 289 are extracellular; it reads LTVTYPEPGKDVILHCVRPSRLRRSETYIN. A helical membrane pass occupies residues 290-310; it reads IYIHWCYLIVNYIIPFLTLAI. Residues 311–341 lie on the Cytoplasmic side of the membrane; the sequence is LNCLIYRQVKRANRERQRLSRSEKREIGLAT. Residues 342–362 traverse the membrane as a helical segment; sequence MLLCVVIVFFMLNFLPLVLNI. Over 363–376 the chain is Extracellular; the sequence is SEAFYSTIDHKITK. A helical membrane pass occupies residues 377–397; it reads ISNLLITINSSVNFLIYIIFG. At 398 to 549 the chain is on the cytoplasmic side; it reads EKFKRIFLLI…KKLGHVSSGF (152 aa).

This sequence belongs to the G-protein coupled receptor 1 family. As to expression, expressed in ovaries, heads and bodies. Expressed in dopaminergic neurons.

It is found in the cell membrane. A receptor for the FMRFamide peptides. Reacts with high affinity to FMRFamide and intrinsic FMRFamide-related peptides. By stimulating intracellular calcium signaling through the inositol 1,4,5-trisphosphate receptor, Itpr, in dopaminergic neurons, may be involved in the maintenance of neuronal excitability and in the regulation of flight bout duration. This chain is FMRFamide receptor, found in Drosophila melanogaster (Fruit fly).